A 74-amino-acid polypeptide reads, in one-letter code: Brevinin-2CG1 (74 aa).

The first 22 residues, 1-22 (MFTMKKSMLVLFFLGTISLSLC), serve as a signal peptide directing secretion. Positions 23-39 (EEERNADEDDGEMTEEV) are cleaved as a propeptide — removed in mature form. C68 and C74 are disulfide-bonded.

Expressed by the skin glands.

It localises to the secreted. Antimicrobial peptide active against a variety of Gram-positive and some Gram-negative bacterial strains. Has antifungal activity against a slime mold isolate. Has hemolytic activity against human erythrocytes. The chain is Brevinin-2CG1 from Amolops chunganensis (Chungan torrent frog).